A 246-amino-acid polypeptide reads, in one-letter code: Large ribosomal subunit protein uL30-like 1 (246 aa).

Ser-54 is modified (phosphoserine).

Belongs to the universal ribosomal protein uL30 family.

The chain is Large ribosomal subunit protein uL30-like 1 (Rpl7l1) from Mus musculus (Mouse).